The sequence spans 252 residues: Flavin-dependent thymidylate synthase (252 aa).

In terms of domain architecture, ThyX spans 7-235 (LDVQLVACST…PTVFSDFETS (229 aa)). DUMP contacts are provided by residues 94-97 (ELVR), 105-109 (QLSQR), and Arg-174. Residues 97 to 99 (RHR) and Gln-105 each bind FAD. The ThyX motif signature appears at 97–107 (RHRHFSFSQLS). Residues 190-192 (NFR) and His-196 contribute to the FAD site. Arg-201 contributes to the dUMP binding site. Arg-201 acts as the Involved in ionization of N3 of dUMP, leading to its activation in catalysis.

Belongs to the thymidylate synthase ThyX family. As to quaternary structure, homotetramer. It depends on FAD as a cofactor.

It catalyses the reaction dUMP + (6R)-5,10-methylene-5,6,7,8-tetrahydrofolate + NADPH + H(+) = dTMP + (6S)-5,6,7,8-tetrahydrofolate + NADP(+). Its pathway is pyrimidine metabolism; dTTP biosynthesis. Its function is as follows. Catalyzes the reductive methylation of 2'-deoxyuridine-5'-monophosphate (dUMP) to 2'-deoxythymidine-5'-monophosphate (dTMP) while utilizing 5,10-methylenetetrahydrofolate (mTHF) as the methyl donor, and NADPH and FADH(2) as the reductant. This Corynebacterium diphtheriae (strain ATCC 700971 / NCTC 13129 / Biotype gravis) protein is Flavin-dependent thymidylate synthase.